A 513-amino-acid polypeptide reads, in one-letter code: MATLFLTILLATVLFLILRIFSHRRNRSHNNRLPPGPNPWPIIGNLPHMGTKPHRTLSAMVTTYGPILHLRLGFVDVVVAASKSVAEQFLKIHDANFASRPPNSGAKHMAYNYQDLVFAPYGHRWRLLRKISSVHLFSAKALEDFKHVRQEEVGTLTRELVRVGTKPVNLGQLVNMCVVNALGREMIGRRLFGADADHKADEFRSMVTEMMALAGVFNIGDFVPSLDWLDLQGVAGKMKRLHKRFDAFLSSILKEHEMNGQDQKHTDMLSTLISLKGTDLDGDGGSLTDTEIKALLLNMFTAGTDTSASTVDWAIAELIRHPDIMVKAQEELDIVVGRDRPVNESDIAQLPYLQAVIKENFRLHPPTPLSLPHIASESCEINGYHIPKGSTLLTNIWAIARDPDQWSDPLAFKPERFLPGGEKSGVDVKGSDFELIPFGAGRRICAGLSLGLRTIQFLTATLVQGFDWELAGGVTPEKLNMEESYGLTLQRAVPLVVHPKPRLAPNVYGLGSG.

Residues 1–21 traverse the membrane as a helical segment; it reads MATLFLTILLATVLFLILRIF. The Cytoplasmic segment spans residues 22–513; it reads SHRRNRSHNN…APNVYGLGSG (492 aa). C445 serves as a coordination point for heme.

Belongs to the cytochrome P450 family. It depends on heme as a cofactor. High expression in siliques and to a lower extent in stems, flowers and senescing leaves.

It is found in the endoplasmic reticulum membrane. It catalyses the reaction a 3'-unsubstituted flavone + reduced [NADPH--hemoprotein reductase] + O2 = a 3'-hydroxyflavone + oxidized [NADPH--hemoprotein reductase] + H2O + H(+). It participates in secondary metabolite biosynthesis; flavonoid biosynthesis. Functionally, catalyzes the 3'-hydroxylation of the flavonoid B-ring to the 3',4'-hydroxylated state. Convert naringenin to eriodictyol and dihydrokaempferol to dihydroquercetin. The protein is Flavonoid 3'-monooxygenase (CYP75B1) of Arabidopsis thaliana (Mouse-ear cress).